Here is a 71-residue protein sequence, read N- to C-terminus: Putative membrane protein insertion efficiency factor (71 aa).

This sequence belongs to the UPF0161 family.

It localises to the cell membrane. Could be involved in insertion of integral membrane proteins into the membrane. This Ruminiclostridium cellulolyticum (strain ATCC 35319 / DSM 5812 / JCM 6584 / H10) (Clostridium cellulolyticum) protein is Putative membrane protein insertion efficiency factor.